The sequence spans 553 residues: Hydroxylamine reductase (553 aa).

[2Fe-2S] cluster-binding residues include cysteine 3, cysteine 6, cysteine 18, and cysteine 25. Hybrid [4Fe-2O-2S] cluster is bound by residues histidine 249, glutamate 273, cysteine 317, cysteine 405, cysteine 433, cysteine 459, glutamate 493, and lysine 495. Position 405 is a cysteine persulfide (cysteine 405).

The protein belongs to the HCP family. [2Fe-2S] cluster is required as a cofactor. Hybrid [4Fe-2O-2S] cluster serves as cofactor.

The protein localises to the cytoplasm. It catalyses the reaction A + NH4(+) + H2O = hydroxylamine + AH2 + H(+). In terms of biological role, catalyzes the reduction of hydroxylamine to form NH(3) and H(2)O. The protein is Hydroxylamine reductase of Actinobacillus succinogenes (strain ATCC 55618 / DSM 22257 / CCUG 43843 / 130Z).